A 462-amino-acid chain; its full sequence is Cysteine--tRNA ligase (462 aa).

Cys-30 is a Zn(2+) binding site. A 'HIGH' region motif is present at residues 32–42 (MTVYDYCHVGH). Zn(2+) contacts are provided by Cys-214, His-239, and Glu-243. A 'KMSKS' region motif is present at residues 271-275 (KMSKS). Lys-274 serves as a coordination point for ATP.

The protein belongs to the class-I aminoacyl-tRNA synthetase family. In terms of assembly, monomer. Zn(2+) is required as a cofactor.

It is found in the cytoplasm. It carries out the reaction tRNA(Cys) + L-cysteine + ATP = L-cysteinyl-tRNA(Cys) + AMP + diphosphate. This Cupriavidus taiwanensis (strain DSM 17343 / BCRC 17206 / CCUG 44338 / CIP 107171 / LMG 19424 / R1) (Ralstonia taiwanensis (strain LMG 19424)) protein is Cysteine--tRNA ligase.